Reading from the N-terminus, the 104-residue chain is Large ribosomal subunit protein uL24 (104 aa).

It belongs to the universal ribosomal protein uL24 family. As to quaternary structure, part of the 50S ribosomal subunit.

In terms of biological role, one of two assembly initiator proteins, it binds directly to the 5'-end of the 23S rRNA, where it nucleates assembly of the 50S subunit. One of the proteins that surrounds the polypeptide exit tunnel on the outside of the subunit. In Pseudomonas fluorescens (strain SBW25), this protein is Large ribosomal subunit protein uL24.